Reading from the N-terminus, the 742-residue chain is Kanadaptin (742 aa).

Residues 1 to 16 show a composition bias toward polar residues; it reads MADILSQSETLASQDL. Residues 1 to 112 form a disordered region; the sequence is MADILSQSET…PPWGGPATAP (112 aa). The segment covering 27 to 43 has biased composition (low complexity); the sequence is VSPAARSKAPASSSSNP. Phosphoserine is present on S28. A compositionally biased stretch (basic and acidic residues) spans 72-82; that stretch reads GDFRSLQEEQS. Residue S90 is modified to Phosphoserine. Residues 96–106 show a composition bias toward pro residues; the sequence is RAPPYQEPPWG. Positions 135-195 constitute an FHA domain; sequence CLFGRLSGCD…HGTFLNKTRI (61 aa). The disordered stretch occupies residues 254–282; it reads LGEDSDEEEEMDTSERKINAGSQDDEMGC. Residues 256–265 show a composition bias toward acidic residues; it reads EDSDEEEEMD. 2 positions are modified to phosphoserine: S258 and S412. A Glycyl lysine isopeptide (Lys-Gly) (interchain with G-Cter in SUMO2) cross-link involves residue K441. A coiled-coil region spans residues 443–476; sequence ETFESLVAKLNDAERELSEISERLKASSQVLSES. S476 carries the post-translational modification Phosphoserine. The interval 565–742 is disordered; it reads LKTGTVGKLP…RTHLNDKYGY (178 aa). Residues 591 to 606 are compositionally biased toward acidic residues; sequence PEVEEEEEEEEEEEKE. Positions 607–619 are enriched in basic and acidic residues; that stretch reads KEEHEKKKLEDGS. A phosphoserine mark is found at S655 and S658. The span at 699-708 shows a compositional bias: low complexity; it reads PGPGKLPPTL. Over residues 732-742 the composition is skewed to basic and acidic residues; the sequence is GRTHLNDKYGY.

Ubiquitously expressed.

It is found in the nucleus. The protein localises to the cytoplasm. This is Kanadaptin (SLC4A1AP) from Homo sapiens (Human).